Here is a 262-residue protein sequence, read N- to C-terminus: Acyl-[acyl-carrier-protein]--UDP-N-acetylglucosamine O-acyltransferase (262 aa).

It belongs to the transferase hexapeptide repeat family. LpxA subfamily. As to quaternary structure, homotrimer.

It localises to the cytoplasm. The enzyme catalyses a (3R)-hydroxyacyl-[ACP] + UDP-N-acetyl-alpha-D-glucosamine = a UDP-3-O-[(3R)-3-hydroxyacyl]-N-acetyl-alpha-D-glucosamine + holo-[ACP]. The protein operates within glycolipid biosynthesis; lipid IV(A) biosynthesis; lipid IV(A) from (3R)-3-hydroxytetradecanoyl-[acyl-carrier-protein] and UDP-N-acetyl-alpha-D-glucosamine: step 1/6. Its function is as follows. Involved in the biosynthesis of lipid A, a phosphorylated glycolipid that anchors the lipopolysaccharide to the outer membrane of the cell. This is Acyl-[acyl-carrier-protein]--UDP-N-acetylglucosamine O-acyltransferase from Wigglesworthia glossinidia brevipalpis.